The chain runs to 722 residues: Zinc finger protein 219 (722 aa).

Positions 1 to 21 (MEGSRPRAPSGHLAPSPPAFD) are disordered. At Ser16 the chain carries Phosphoserine. 2 consecutive C2H2-type zinc fingers follow at residues 57–79 (FPCP…LRAH) and 85–107 (FQCP…LRTH). Positions 137 to 160 (ARSSGGMQATPATEGLARPQAPSS) are disordered. 2 consecutive C2H2-type zinc fingers follow at residues 163–186 (FRCP…HILH) and 189–212 (WKCG…LTAH). The interval 215–275 (PERPLAATSA…EEPPAPPEFR (61 aa)) is disordered. 2 stretches are compositionally biased toward pro residues: residues 225–247 (APPP…PQPE) and 259–272 (TPAP…PAPP). 2 C2H2-type zinc fingers span residues 274–296 (FRCQ…MRKH) and 302–324 (HACP…MKVH). Residues 384-495 (LRAGEGRPNG…GTRPEGGRGA (112 aa)) form a disordered region. A compositionally biased stretch (gly residues) spans 390 to 404 (RPNGEGAEPGPGRSF). Acidic residues predominate over residues 425–438 (EPEEEEEVVEAEEE). A compositionally biased stretch (low complexity) spans 463-477 (SASAAGAQARSTATQ). C2H2-type zinc fingers lie at residues 498-520 (KDCP…LRVH) and 526-548 (YKCP…LQRH). 2 disordered regions span residues 542 to 648 (KYHL…LHRC) and 668 to 722 (HHSR…GQER). Positions 558-568 (PGPPPEPPPPS) are enriched in pro residues. Residues 634-643 (GPGGEAGPGG) are compositionally biased toward gly residues. The C2H2-type 9 zinc finger occupies 646–668 (HRCLFCPFATGAPELMALHLQVH). Residues 668–677 (HHSRRARGRR) show a composition bias toward basic residues. Ser692 bears the Phosphoserine mark. Position 695 is a phosphothreonine (Thr695). The residue at position 698 (Ser698) is a Phosphoserine.

The protein belongs to the krueppel C2H2-type zinc-finger protein family. As to quaternary structure, interacts with SOX9 (via C-terminus). Ubiquitous.

The protein resides in the nucleus. In terms of biological role, transcriptional regulator. Recognizes and binds 2 copies of the core DNA sequence motif 5'-GGGGG-3'. Binds to the HMGN1 promoter and may repress HMGN1 expression. Regulates SNCA expression in primary cortical neurons. Binds to the COL2A1 promoter and activates COL2A1 expression, as part of a complex with SOX9. Plays a role in chondrocyte differentiation. The chain is Zinc finger protein 219 (ZNF219) from Homo sapiens (Human).